We begin with the raw amino-acid sequence, 291 residues long: Phosphate import ATP-binding protein PstB (291 aa).

Basic and acidic residues predominate over residues 1–17 (MANTNVKEKELAKHTDQ). The disordered stretch occupies residues 1-40 (MANTNVKEKELAKHTDQSQESISTVVSSNEVKHNKESDSN). Over residues 18–29 (SQESISTVVSSN) the composition is skewed to polar residues. Residues 30 to 40 (EVKHNKESDSN) are compositionally biased toward basic and acidic residues. The 242-residue stretch at 45–286 (YSTQNLDLWY…PSDKQTEDYI (242 aa)) folds into the ABC transporter domain. 77–84 (GPSGCGKS) serves as a coordination point for ATP.

The protein belongs to the ABC transporter superfamily. Phosphate importer (TC 3.A.1.7) family. As to quaternary structure, the complex is composed of two ATP-binding proteins (PstB), two transmembrane proteins (PstC and PstA) and a solute-binding protein (PstS).

The protein localises to the cell membrane. The catalysed reaction is phosphate(out) + ATP + H2O = ADP + 2 phosphate(in) + H(+). Part of the ABC transporter complex PstSACB involved in phosphate import. Responsible for energy coupling to the transport system. The sequence is that of Phosphate import ATP-binding protein PstB from Staphylococcus haemolyticus (strain JCSC1435).